Reading from the N-terminus, the 327-residue chain is Lactosylceramide 4-alpha-galactosyltransferase (327 aa).

The DXD motif motif lies at 166 to 168 (DTD).

It belongs to the glycosyltransferase 32 family.

It localises to the golgi apparatus membrane. The enzyme catalyses a beta-D-Gal-(1-&gt;4)-beta-D-Glc-(1&lt;-&gt;1)-Cer(d18:1(4E)) + UDP-alpha-D-galactose = a globoside Gb3Cer (d18:1(4E)) + UDP + H(+). The catalysed reaction is a beta-D-Gal-(1&lt;-&gt;1')-ceramide + UDP-alpha-D-galactose = alpha-D-Gal-(1-&gt;4)-beta-D-Gal-(1&lt;-&gt;1')-Cer + UDP + H(+). It functions in the pathway glycolipid biosynthesis. Catalyzes the transfer of galactose from UDP-alpha-D-galactose to lactosylceramide/beta-D-galactosyl-(1-&gt;4)-beta-D-glucosyl-(1&lt;-&gt;1)-ceramide(d18:1(4E)) to produce globotriaosylceramide/globoside Gb3Cer (d18:1(4E)). Also able to transfer galactose to galactosylceramide/beta-D-Gal-(1&lt;-&gt;1')-Cer. Globoside Gb3Cer is a glycosphingolipid of the globo serie, one of the major types of neutral root structures of glycosphingolipids, that constitute a significant portion of mammalian cell membranes. In Gorilla gorilla gorilla (Western lowland gorilla), this protein is Lactosylceramide 4-alpha-galactosyltransferase (A4GALT).